A 190-amino-acid chain; its full sequence is Protein soem-1 (190 aa).

In terms of domain architecture, SH2 spans 96 to 190; sequence YMEQNMNRVE…LVLKNQLKPV (95 aa).

Interacts with abl-1. In terms of tissue distribution, expressed in PQR, but not AQR, Q neuroblast descendents.

Functions downstream of migratory protein mig-13 and may play a role in the control of Q neuroblast migration during larval development. The chain is Protein soem-1 from Caenorhabditis elegans.